The chain runs to 257 residues: Adenylate kinase (257 aa).

Residue 52–57 (GAGKGT) participates in ATP binding. Residues 72–101 (ATGDMLRSQVAKKTELGKEAKKIMDQGGLV) are NMP. AMP-binding positions include threonine 73, arginine 78, 99 to 101 (GLV), 128 to 131 (GFPR), and glutamine 135. Residues 169–206 (GRLVHPASGRSYHKIFNPPKNDMKDDVTGEPLIQRSDD) are LID. Residues arginine 170 and 179 to 180 (SY) each bind ATP. 2 residues coordinate AMP: arginine 203 and arginine 214. Position 242 (glutamine 242) interacts with ATP.

Belongs to the adenylate kinase family. AK2 subfamily. As to quaternary structure, monomer.

The protein localises to the cytoplasm. It is found in the cytosol. Its subcellular location is the mitochondrion intermembrane space. It carries out the reaction AMP + ATP = 2 ADP. In terms of biological role, catalyzes the reversible transfer of the terminal phosphate group between ATP and AMP. Plays an important role in cellular energy homeostasis and in adenine nucleotide metabolism. Adenylate kinase activity is critical for regulation of the phosphate utilization and the AMP de novo biosynthesis pathways. This is Adenylate kinase (adk1) from Aspergillus fumigatus (strain CBS 144.89 / FGSC A1163 / CEA10) (Neosartorya fumigata).